A 43-amino-acid chain; its full sequence is Methionine aminopeptidase (43 aa).

It belongs to the peptidase M24A family. Methionine aminopeptidase type 1 subfamily. As to quaternary structure, monomer. Requires Co(2+) as cofactor. The cofactor is Zn(2+). It depends on Mn(2+) as a cofactor. Fe(2+) is required as a cofactor.

The catalysed reaction is Release of N-terminal amino acids, preferentially methionine, from peptides and arylamides.. Removes the N-terminal methionine from nascent proteins. The N-terminal methionine is often cleaved when the second residue in the primary sequence is small and uncharged (Met-Ala-, Cys, Gly, Pro, Ser, Thr, or Val). Requires deformylation of the N(alpha)-formylated initiator methionine before it can be hydrolyzed. This is Methionine aminopeptidase (map) from Klebsiella oxytoca.